The chain runs to 303 residues: Recombination-associated protein RdgC (303 aa).

Belongs to the RdgC family.

The protein localises to the cytoplasm. It localises to the nucleoid. Functionally, may be involved in recombination. The sequence is that of Recombination-associated protein RdgC from Enterobacter sp. (strain 638).